A 292-amino-acid polypeptide reads, in one-letter code: Calcium-binding protein CBP (292 aa).

The interval 1-80 (MAGYPPNPGS…YGSGGGYGAP (80 aa)) is disordered. The segment covering 12–21 (YPYGGAGGYG) has biased composition (gly residues). Residues 22–40 (APPPPYGSSPAPSAPPYGA) show a composition bias toward pro residues. EF-hand domains follow at residues 121–156 (GTDPNVVACFQAADRDGSGMIDDKELQSALSGYSQS) and 187–222 (YSLQNWRSIFERFDRDRSGKIDATELRDALLSLGYS). Asp-134, Asp-136, Ser-138, Met-140, Glu-145, Asp-200, Asp-202, Ser-204, Lys-206, and Glu-211 together coordinate Ca(2+).

Its function is as follows. Potential calcium sensor. The chain is Calcium-binding protein CBP from Oryza sativa subsp. japonica (Rice).